Consider the following 424-residue polypeptide: Phosphomethylpyrimidine synthase (424 aa).

Substrate-binding positions include Met94, Tyr123, His162, 184 to 186 (SRG), 225 to 228 (NGMR), and Glu264. His268 contributes to the Zn(2+) binding site. Residue Tyr291 coordinates substrate. His332 serves as a coordination point for Zn(2+). Cys406, Cys409, and Cys413 together coordinate [4Fe-4S] cluster.

This sequence belongs to the ThiC family. The cofactor is [4Fe-4S] cluster.

The enzyme catalyses 5-amino-1-(5-phospho-beta-D-ribosyl)imidazole + S-adenosyl-L-methionine = 4-amino-2-methyl-5-(phosphooxymethyl)pyrimidine + CO + 5'-deoxyadenosine + formate + L-methionine + 3 H(+). The protein operates within cofactor biosynthesis; thiamine diphosphate biosynthesis. Catalyzes the synthesis of the hydroxymethylpyrimidine phosphate (HMP-P) moiety of thiamine from aminoimidazole ribotide (AIR) in a radical S-adenosyl-L-methionine (SAM)-dependent reaction. In Methanosphaerula palustris (strain ATCC BAA-1556 / DSM 19958 / E1-9c), this protein is Phosphomethylpyrimidine synthase.